The sequence spans 220 residues: Peptidyl-tRNA hydrolase (220 aa).

Tyr-14 contributes to the tRNA binding site. His-19 acts as the Proton acceptor in catalysis. TRNA is bound by residues Phe-60, Asn-62, and Asn-106.

The protein belongs to the PTH family. As to quaternary structure, monomer.

The protein localises to the cytoplasm. The enzyme catalyses an N-acyl-L-alpha-aminoacyl-tRNA + H2O = an N-acyl-L-amino acid + a tRNA + H(+). Functionally, hydrolyzes ribosome-free peptidyl-tRNAs (with 1 or more amino acids incorporated), which drop off the ribosome during protein synthesis, or as a result of ribosome stalling. Its function is as follows. Catalyzes the release of premature peptidyl moieties from peptidyl-tRNA molecules trapped in stalled 50S ribosomal subunits, and thus maintains levels of free tRNAs and 50S ribosomes. In Campylobacter hominis (strain ATCC BAA-381 / DSM 21671 / CCUG 45161 / LMG 19568 / NCTC 13146 / CH001A), this protein is Peptidyl-tRNA hydrolase.